The primary structure comprises 349 residues: Estrogen receptor (349 aa).

The segment at residues 1-5 is a DNA-binding region (nuclear receptor); sequence YEVGM. The tract at residues 1 to 38 is disordered; sequence YEVGMMKGGIRKDRRGGRMLKHKRQREENDSRNAGALT. The span at 12-24 shows a compositional bias: basic residues; sequence KDRRGGRMLKHKR. The 237-residue stretch at 65–301 folds into the NR LBD domain; sequence TADQMVSALL…DLLLEMLDAH (237 aa). Residues 306-327 are disordered; that stretch reads PAAKGSPPSEDDPLNQLAVPSP.

Belongs to the nuclear hormone receptor family. NR3 subfamily. In terms of assembly, binds DNA as a homodimer. Can form a heterodimer with ER-beta.

It localises to the nucleus. The steroid hormones and their receptors are involved in the regulation of eukaryotic gene expression and affect cellular proliferation and differentiation in target tissues. In Anolis carolinensis (Green anole), this protein is Estrogen receptor (ESR1).